We begin with the raw amino-acid sequence, 183 residues long: Large ribosomal subunit protein uL18 (183 aa).

The protein belongs to the universal ribosomal protein uL18 family. Part of the 50S ribosomal subunit. Contacts the 5S and 23S rRNAs.

Functionally, this is one of the proteins that bind and probably mediate the attachment of the 5S RNA into the large ribosomal subunit, where it forms part of the central protuberance. This chain is Large ribosomal subunit protein uL18, found in Halobacterium salinarum (strain ATCC 29341 / DSM 671 / R1).